A 406-amino-acid chain; its full sequence is uncharacterized protein (406 aa).

The span at 136–153 (SQKNWGSEKNWNSPSQGP) shows a compositional bias: polar residues. The disordered stretch occupies residues 136–157 (SQKNWGSEKNWNSPSQGPASRE).

This is an uncharacterized protein from Rattus norvegicus (Rat).